The sequence spans 244 residues: Small ribosomal subunit protein uS2 (244 aa).

The segment at 224–244 is disordered; it reads GQQGSDEAEEAEEAAEEVVAE. A compositionally biased stretch (acidic residues) spans 229 to 244; sequence DEAEEAEEAAEEVVAE.

This sequence belongs to the universal ribosomal protein uS2 family.

The polypeptide is Small ribosomal subunit protein uS2 (Desulfitobacterium hafniense (strain DSM 10664 / DCB-2)).